Consider the following 329-residue polypeptide: Lipoyl synthase (329 aa).

The segment at 1–23 (MTDLTATPAPAEPAASAYDPTAK) is disordered. [4Fe-4S] cluster is bound by residues Cys76, Cys81, Cys87, Cys102, Cys106, Cys109, and Ser316. Residues 87–305 (CFGKGTATFM…EEEAYKMGFT (219 aa)) form the Radical SAM core domain.

This sequence belongs to the radical SAM superfamily. Lipoyl synthase family. It depends on [4Fe-4S] cluster as a cofactor.

The protein localises to the cytoplasm. It carries out the reaction [[Fe-S] cluster scaffold protein carrying a second [4Fe-4S](2+) cluster] + N(6)-octanoyl-L-lysyl-[protein] + 2 oxidized [2Fe-2S]-[ferredoxin] + 2 S-adenosyl-L-methionine + 4 H(+) = [[Fe-S] cluster scaffold protein] + N(6)-[(R)-dihydrolipoyl]-L-lysyl-[protein] + 4 Fe(3+) + 2 hydrogen sulfide + 2 5'-deoxyadenosine + 2 L-methionine + 2 reduced [2Fe-2S]-[ferredoxin]. The protein operates within protein modification; protein lipoylation via endogenous pathway; protein N(6)-(lipoyl)lysine from octanoyl-[acyl-carrier-protein]: step 2/2. Catalyzes the radical-mediated insertion of two sulfur atoms into the C-6 and C-8 positions of the octanoyl moiety bound to the lipoyl domains of lipoate-dependent enzymes, thereby converting the octanoylated domains into lipoylated derivatives. In Burkholderia mallei (strain NCTC 10247), this protein is Lipoyl synthase.